Here is a 240-residue protein sequence, read N- to C-terminus: Purine nucleoside phosphorylase DeoD-type (240 aa).

His5 serves as a coordination point for a purine D-ribonucleoside. Phosphate contacts are provided by residues Gly21, Arg25, Arg44, and 88–91; that span reads RVGS. Residues 180-182 and 204-205 each bind a purine D-ribonucleoside; these read EME and SD. The active-site Proton donor is Asp205.

The protein belongs to the PNP/UDP phosphorylase family. In terms of assembly, homohexamer; trimer of homodimers.

The enzyme catalyses a purine D-ribonucleoside + phosphate = a purine nucleobase + alpha-D-ribose 1-phosphate. It carries out the reaction a purine 2'-deoxy-D-ribonucleoside + phosphate = a purine nucleobase + 2-deoxy-alpha-D-ribose 1-phosphate. Catalyzes the reversible phosphorolytic breakdown of the N-glycosidic bond in the beta-(deoxy)ribonucleoside molecules, with the formation of the corresponding free purine bases and pentose-1-phosphate. The chain is Purine nucleoside phosphorylase DeoD-type from Actinobacillus pleuropneumoniae serotype 5b (strain L20).